Here is a 207-residue protein sequence, read N- to C-terminus: Uridine kinase (207 aa).

Gly14–Thr21 lines the ATP pocket.

The protein belongs to the uridine kinase family.

The protein resides in the cytoplasm. The catalysed reaction is uridine + ATP = UMP + ADP + H(+). The enzyme catalyses cytidine + ATP = CMP + ADP + H(+). Its pathway is pyrimidine metabolism; CTP biosynthesis via salvage pathway; CTP from cytidine: step 1/3. It participates in pyrimidine metabolism; UMP biosynthesis via salvage pathway; UMP from uridine: step 1/1. The chain is Uridine kinase from Deinococcus deserti (strain DSM 17065 / CIP 109153 / LMG 22923 / VCD115).